A 131-amino-acid chain; its full sequence is Photosystem II reaction center Psb28 protein (131 aa).

The tract at residues 110–131 is disordered; that stretch reads NGLGYSQNQKSDQTDAATEEQA. Residues 112–125 are compositionally biased toward polar residues; sequence LGYSQNQKSDQTDA.

The protein belongs to the Psb28 family. As to quaternary structure, part of the photosystem II complex.

It is found in the cellular thylakoid membrane. The protein is Photosystem II reaction center Psb28 protein of Synechococcus sp. (strain CC9902).